A 669-amino-acid polypeptide reads, in one-letter code: Trifunctional UDP-glucose 4,6-dehydratase/UDP-4-keto-6-deoxy-D-glucose 3,5-epimerase/UDP-4-keto-L-rhamnose-reductase RHM1 (669 aa).

Residue 13-19 (GAAGFIA) coordinates NAD(+). Thr132 provides a ligand contact to substrate. The Proton donor role is filled by Asp133. Catalysis depends on proton acceptor residues Glu134 and Tyr159. An NADP(+)-binding site is contributed by 391–397 (GKTGWIG).

The protein in the N-terminal section; belongs to the NAD(P)-dependent epimerase/dehydratase family. dTDP-glucose dehydratase subfamily. This sequence in the C-terminal section; belongs to the dTDP-4-dehydrorhamnose reductase family. NAD(+) is required as a cofactor. The cofactor is NADP(+). As to expression, expressed in roots, stems, leaves, seedlings, inflorescence tips, and siliques. Detected in the adaxial side of cotyledons, in the emerging leaves and in trichomes. Also detected in the root tip, more precisely in the epidermal cells in the meristematic and elongation zone.

It is found in the cytoplasm. The protein resides in the cytosol. It carries out the reaction UDP-alpha-D-glucose = UDP-4-dehydro-6-deoxy-alpha-D-glucose + H2O. It functions in the pathway carbohydrate biosynthesis. Trifunctional enzyme involved in UDP-beta-L-rhamnose biosynthesis, a precursor of the primary cell wall components rhamnogalacturonan I (RG-I) and rhamnogalacturonan II (RG-II). Plays a major role in supplying UDP-rhamnose for flavonol biosynthesis. Catalyzes the dehydration of UDP-glucose to form UDP-4-dehydro-6-deoxy-D-glucose followed by the epimerization of the C3' and C5' positions of UDP-4-dehydro-6-deoxy-D-glucose to form UDP-4-keto-beta-L-rhamnose and the reduction of UDP-4-keto-beta-L-rhamnose to yield UDP-beta-L-rhamnose. The sequence is that of Trifunctional UDP-glucose 4,6-dehydratase/UDP-4-keto-6-deoxy-D-glucose 3,5-epimerase/UDP-4-keto-L-rhamnose-reductase RHM1 from Arabidopsis thaliana (Mouse-ear cress).